Reading from the N-terminus, the 1364-residue chain is Outer kinetochore KNL1 complex subunit spc7 (1364 aa).

Residues 1–15 (MPTSPRRNSIATTDN) are compositionally biased toward polar residues. Disordered stretches follow at residues 1-36 (MPTS…GALQ), 124-190 (YPKD…DIAS), and 202-223 (EALN…LSIQ). Residues 124–136 (YPKDHQSDSEKST) are compositionally biased toward basic and acidic residues. Residues 157 to 169 (GPTTTSFSRNETQ) show a composition bias toward polar residues. The span at 170 to 181 (SSPHSHSASIIS) shows a compositional bias: low complexity. Residues 254–257 (MDLT) carry the MELT; degenerate motif. A Phosphothreonine; by mph1 modification is found at Thr-257. The disordered stretch occupies residues 289-334 (ASHDPSNQTQLSSPNKSSSPTSIEISDFSKNNENHDQSENKEEEED). A compositionally biased stretch (low complexity) spans 300-310 (SSPNKSSSPTS). Residues 318–328 (KNNENHDQSEN) are compositionally biased toward basic and acidic residues. The short motif at 450 to 453 (MDLT) is the MELT; degenerate element. Thr-453 carries the phosphothreonine; by mph1 modification. The interval 456 to 503 (ISSTNAPTHLNEDDLNQFTSNISSSSKPRKDNNKTANSSKPIPDSEDF) is disordered. Polar residues predominate over residues 471 to 481 (NQFTSNISSSS). An MELT; degenerate motif is present at residues 504–507 (MDIT). The residue at position 507 (Thr-507) is a Phosphothreonine; by mph1. Disordered regions lie at residues 564-643 (LPSA…SSFD) and 697-837 (GATP…GVSN). The span at 566–585 (SADKENAEREEIPSYSDKSE) shows a compositional bias: basic and acidic residues. The span at 586-617 (NFNTTSFTNHERSPNGNNNLKFSKDPNSSSPS) shows a compositional bias: polar residues. Residues 719-730 (EVSRQPTDDKGE) show a composition bias toward basic and acidic residues. Positions 747–773 (LTIQQTNEIKHVPTNTTSSVKLPQQPS) are enriched in polar residues. The span at 791-802 (SLERLESQEPNR) shows a compositional bias: basic and acidic residues. Positions 808–820 (VGSSNAGNTTSVG) are enriched in polar residues. A coiled-coil region spans residues 1075–1155 (LAQAQEKLEK…EEQLLNLKNE (81 aa)). A Nuclear localization signal motif is present at residues 1091 to 1105 (RRRRLLSEKEERRKE).

In terms of assembly, component of the KNL1/SPC105 complex composed of at least spc7 and sos7. Part of the outer kinetochore KMN network that includes the KNL1, MIS12 and NDC80 complexes. Interacts (via C-terminus) with sos7 (via C-terminus); the interaction is direct. Interacts (when phosphorylated on MELT motifs) with bub1 and bub3; to recruit the BUB1-BUB3 complex to the kinetochore. Post-translationally, phosphorylation of threonine residues in the MELT motifs by mph1/mps1 leads to recruitment of bub1 and bub3 to the kinetochore, and is required to maintain spindle assembly checkpoint signaling.

The protein localises to the nucleus. It is found in the chromosome. It localises to the centromere. Its subcellular location is the kinetochore. Acts as a component of the outer kinetochore KNL1 complex that serves as a docking point for spindle assembly checkpoint components and mediates microtubule-kinetochore interactions. Kinetochores, consisting of a centromere-associated inner segment and a microtubule-contacting outer segment, play a crucial role in chromosome segregation by mediating the physical connection between centromeric DNA and spindle microtubules. The outer kinetochore is made up of the ten-subunit KMN network, comprising the MIS12, NDC80 and KNL1 complexes, and auxiliary microtubule-associated components; together they connect the outer kinetochore with the inner kinetochore, bind microtubules, and mediate interactions with mitotic checkpoint proteins that delay anaphase until chromosomes are bioriented on the spindle. Recruits the BUB1-BUB3 complex to kinetochores when phosphorylated by mph1/mps1, to support spindle assembly checkpoint signaling. Functions both in mitotic and in meiotic chromosome segregation. The polypeptide is Outer kinetochore KNL1 complex subunit spc7 (Schizosaccharomyces pombe (strain 972 / ATCC 24843) (Fission yeast)).